The primary structure comprises 441 residues: Ribosomal protein uS12 methylthiotransferase RimO (441 aa).

The MTTase N-terminal domain maps to 8 to 118; it reads PKIGFVSLGC…VLQHVHHYVP (111 aa). Residues C17, C53, C82, C150, C154, and C157 each contribute to the [4Fe-4S] cluster site. The Radical SAM core domain maps to 136-373; it reads LTPRHYAYLK…MQLQQQISAE (238 aa). In terms of domain architecture, TRAM spans 376–441; it reads QEKVGREILV…DEYDLWGSRV (66 aa).

Belongs to the methylthiotransferase family. RimO subfamily. The cofactor is [4Fe-4S] cluster.

Its subcellular location is the cytoplasm. It catalyses the reaction L-aspartate(89)-[ribosomal protein uS12]-hydrogen + (sulfur carrier)-SH + AH2 + 2 S-adenosyl-L-methionine = 3-methylsulfanyl-L-aspartate(89)-[ribosomal protein uS12]-hydrogen + (sulfur carrier)-H + 5'-deoxyadenosine + L-methionine + A + S-adenosyl-L-homocysteine + 2 H(+). Functionally, catalyzes the methylthiolation of an aspartic acid residue of ribosomal protein uS12. The protein is Ribosomal protein uS12 methylthiotransferase RimO of Salmonella agona (strain SL483).